Reading from the N-terminus, the 201-residue chain is Dephospho-CoA kinase (201 aa).

The DPCK domain maps to 4–201; sequence IIGITGGIAS…LEGGRQDDRD (198 aa). 12–17 is an ATP binding site; that stretch reads ASGKST.

Belongs to the CoaE family.

The protein localises to the cytoplasm. The enzyme catalyses 3'-dephospho-CoA + ATP = ADP + CoA + H(+). It functions in the pathway cofactor biosynthesis; coenzyme A biosynthesis; CoA from (R)-pantothenate: step 5/5. Functionally, catalyzes the phosphorylation of the 3'-hydroxyl group of dephosphocoenzyme A to form coenzyme A. The chain is Dephospho-CoA kinase from Streptococcus pneumoniae serotype 4 (strain ATCC BAA-334 / TIGR4).